Reading from the N-terminus, the 154-residue chain is Urease accessory protein UreE (154 aa).

Residues 134-154 (PESGAYGKSGHNHGHSHSHED) form a disordered region. Over residues 143–154 (GHNHGHSHSHED) the composition is skewed to basic residues.

Belongs to the UreE family.

The protein localises to the cytoplasm. Its function is as follows. Involved in urease metallocenter assembly. Binds nickel. Probably functions as a nickel donor during metallocenter assembly. The polypeptide is Urease accessory protein UreE (Alteromonas mediterranea (strain DSM 17117 / CIP 110805 / LMG 28347 / Deep ecotype)).